Consider the following 872-residue polypeptide: Alanine--tRNA ligase (872 aa).

4 residues coordinate Zn(2+): H567, H571, C669, and H673.

This sequence belongs to the class-II aminoacyl-tRNA synthetase family. The cofactor is Zn(2+).

The protein resides in the cytoplasm. The catalysed reaction is tRNA(Ala) + L-alanine + ATP = L-alanyl-tRNA(Ala) + AMP + diphosphate. Functionally, catalyzes the attachment of alanine to tRNA(Ala) in a two-step reaction: alanine is first activated by ATP to form Ala-AMP and then transferred to the acceptor end of tRNA(Ala). Also edits incorrectly charged Ser-tRNA(Ala) and Gly-tRNA(Ala) via its editing domain. The sequence is that of Alanine--tRNA ligase from Streptococcus pyogenes serotype M6 (strain ATCC BAA-946 / MGAS10394).